We begin with the raw amino-acid sequence, 284 residues long: 2,3,4,5-tetrahydropyridine-2,6-dicarboxylate N-succinyltransferase (284 aa).

Residues Arg-111 and Asp-148 each contribute to the substrate site.

Belongs to the transferase hexapeptide repeat family. As to quaternary structure, homotrimer.

Its subcellular location is the cytoplasm. The catalysed reaction is (S)-2,3,4,5-tetrahydrodipicolinate + succinyl-CoA + H2O = (S)-2-succinylamino-6-oxoheptanedioate + CoA. Its pathway is amino-acid biosynthesis; L-lysine biosynthesis via DAP pathway; LL-2,6-diaminopimelate from (S)-tetrahydrodipicolinate (succinylase route): step 1/3. The chain is 2,3,4,5-tetrahydropyridine-2,6-dicarboxylate N-succinyltransferase from Ehrlichia ruminantium (strain Gardel).